The chain runs to 141 residues: 4-hydroxybenzoyl-CoA thioesterase (141 aa).

The active site involves Asp-17. Substrate-binding positions include Trp-47, 59–61 (TPI), and Lys-90.

The protein belongs to the 4-hydroxybenzoyl-CoA thioesterase family. Homotetramer.

It carries out the reaction 4-hydroxybenzoyl-CoA + H2O = 4-hydroxybenzoate + CoA + H(+). The protein operates within xenobiotic degradation; 4-chlorobenzoate degradation; 4-hydroxybenzoate from 4-chlorobenzoate: step 3/3. With respect to regulation, unaffected by EDTA, Mg(2+), Mn(2+), Fe(2+), Ca(2+), Co(2+) and Zn(2+). Functionally, hydrolyzes 4-hydroxybenzoate-CoA, and to a lesser extent benzoyl-CoA and 4-chlorobenzoate-CoA. Not active against aliphatic acyl-CoA thioesters, including palmitoyl-CoA, hexanoyl-CoA and acetyl-CoA. This is 4-hydroxybenzoyl-CoA thioesterase from Pseudomonas sp. (strain CBS-3).